The chain runs to 455 residues: Kynureninase (455 aa).

Residues Leu94, Thr95, 122 to 125, Asp208, His211, and Tyr233 contribute to the pyridoxal 5'-phosphate site; that span reads FPSD. Lys234 bears the N6-(pyridoxal phosphate)lysine mark. Pyridoxal 5'-phosphate is bound by residues Trp275 and Asn303.

Belongs to the kynureninase family. As to quaternary structure, homodimer. Pyridoxal 5'-phosphate serves as cofactor.

It localises to the cytoplasm. It catalyses the reaction L-kynurenine + H2O = anthranilate + L-alanine + H(+). The catalysed reaction is 3-hydroxy-L-kynurenine + H2O = 3-hydroxyanthranilate + L-alanine + H(+). The protein operates within amino-acid degradation; L-kynurenine degradation; L-alanine and anthranilate from L-kynurenine: step 1/1. It functions in the pathway cofactor biosynthesis; NAD(+) biosynthesis; quinolinate from L-kynurenine: step 2/3. Catalyzes the cleavage of L-kynurenine (L-Kyn) and L-3-hydroxykynurenine (L-3OHKyn) into anthranilic acid (AA) and 3-hydroxyanthranilic acid (3-OHAA), respectively. This chain is Kynureninase, found in Vanderwaltozyma polyspora (strain ATCC 22028 / DSM 70294 / BCRC 21397 / CBS 2163 / NBRC 10782 / NRRL Y-8283 / UCD 57-17) (Kluyveromyces polysporus).